A 250-amino-acid polypeptide reads, in one-letter code: Hydroxyacylglutathione hydrolase (250 aa).

Residues H53, H55, D57, H58, H110, D127, and H165 each coordinate Zn(2+).

It belongs to the metallo-beta-lactamase superfamily. Glyoxalase II family. Monomer. It depends on Zn(2+) as a cofactor.

It carries out the reaction an S-(2-hydroxyacyl)glutathione + H2O = a 2-hydroxy carboxylate + glutathione + H(+). Its pathway is secondary metabolite metabolism; methylglyoxal degradation; (R)-lactate from methylglyoxal: step 2/2. In terms of biological role, thiolesterase that catalyzes the hydrolysis of S-D-lactoyl-glutathione to form glutathione and D-lactic acid. This is Hydroxyacylglutathione hydrolase from Buchnera aphidicola subsp. Schizaphis graminum (strain Sg).